Here is a 299-residue protein sequence, read N- to C-terminus: Tyrosine recombinase XerC (299 aa).

The Core-binding (CB) domain maps to 1–85 (MEQHLDAYCM…AVRGFYKYLN (85 aa)). In terms of domain architecture, Tyr recombinase spans 106 to 285 (RLPKTLDTDR…DFQHLATVYD (180 aa)). Residues Arg-146, Lys-170, His-237, Arg-240, and His-263 contribute to the active site. Tyr-272 (O-(3'-phospho-DNA)-tyrosine intermediate) is an active-site residue.

It belongs to the 'phage' integrase family. XerC subfamily. As to quaternary structure, forms a cyclic heterotetrameric complex composed of two molecules of XerC and two molecules of XerD.

It is found in the cytoplasm. In terms of biological role, site-specific tyrosine recombinase, which acts by catalyzing the cutting and rejoining of the recombining DNA molecules. The XerC-XerD complex is essential to convert dimers of the bacterial chromosome into monomers to permit their segregation at cell division. It also contributes to the segregational stability of plasmids. This Pseudomonas savastanoi pv. phaseolicola (strain 1448A / Race 6) (Pseudomonas syringae pv. phaseolicola (strain 1448A / Race 6)) protein is Tyrosine recombinase XerC.